Consider the following 133-residue polypeptide: Transcription antitermination protein NusB (133 aa).

Belongs to the NusB family.

Its function is as follows. Involved in transcription antitermination. Required for transcription of ribosomal RNA (rRNA) genes. Binds specifically to the boxA antiterminator sequence of the ribosomal RNA (rrn) operons. The chain is Transcription antitermination protein NusB from Pediococcus pentosaceus (strain ATCC 25745 / CCUG 21536 / LMG 10740 / 183-1w).